Consider the following 25-residue polypeptide: Caerin-1.19 (25 aa).

Leucine amide is present on L25.

Belongs to the frog skin active peptide (FSAP) family. Caerin subfamily. Expressed by the skin dorsal glands.

Its subcellular location is the secreted. Functionally, caerin-1.19 shows significant activity against Gram-positive organisms, but is less effective against Gram-negative organisms. This chain is Caerin-1.19, found in Ranoidea gracilenta (Dainty green tree frog).